The following is a 398-amino-acid chain: Cytochrome b (398 aa).

A helical membrane pass occupies residues 45–65; sequence LGSIAGIALVIQIITGVILAM. Heme b-binding residues include His95 and His109. Helical transmembrane passes span 96-116, 129-149, 164-184, 192-212, 245-265, 277-297, 304-324, 339-359, and 366-386; these read AVGASMFFAAVYLHIARGLYY, IGIIIFLTMMATAFMGYVLPW, FSAIPLIGEFIVTWLWGGFSV, FFSLHYLLPFIIVALVMLHLV, FVGFGVYFIIFAYFIFYEPNY, PLVTPAHIVPEWYFLPFYAIL, LGGVLLMFGSIFVLFLLPWLD, MAFWIFMADCLLLGYLGGQPA, and ISRFAACYYFFHVLVALPLIG. Heme b-binding residues include His196 and His210.

It belongs to the cytochrome b family. In terms of assembly, the main subunits of complex b-c1 are: cytochrome b, cytochrome c1 and the Rieske protein. The cofactor is heme b.

It is found in the cell membrane. Its function is as follows. Component of the ubiquinol-cytochrome c reductase complex (complex III or cytochrome b-c1 complex), which is a respiratory chain that generates an electrochemical potential coupled to ATP synthesis. In Rickettsia conorii (strain ATCC VR-613 / Malish 7), this protein is Cytochrome b (petB).